Reading from the N-terminus, the 406-residue chain is 12S rRNA N(4)-cytidine methyltransferase METTL15 (406 aa).

Residues 1–22 (MLRYPYFYRTYNRLFSHFVDSG) constitute a mitochondrion transit peptide. Residues 100 to 102 (GGH), Asp-119, Phe-146, Asp-169, and Gln-176 contribute to the S-adenosyl-L-methionine site. Ser-358 bears the Phosphoserine mark.

The protein belongs to the methyltransferase superfamily. RsmH family.

The protein resides in the mitochondrion matrix. The catalysed reaction is cytidine(839) in 12S rRNA + S-adenosyl-L-methionine = N(4)-methylcytidine(839) in 12S rRNA + S-adenosyl-L-homocysteine + H(+). Functionally, N4-methylcytidine (m4C) methyltransferase responsible for the methylation of position C839 in mitochondrial 12S rRNA. Involved in the stabilization of 12S rRNA folding, therefore facilitating the assembly of the mitochondrial small ribosomal subunits. In Mus musculus (Mouse), this protein is 12S rRNA N(4)-cytidine methyltransferase METTL15.